The primary structure comprises 136 residues: Nucleoside diphosphate kinase (136 aa).

Lys-10, Phe-58, Arg-86, Thr-92, Arg-104, and Asn-114 together coordinate ATP. Catalysis depends on His-117, which acts as the Pros-phosphohistidine intermediate.

Belongs to the NDK family. In terms of assembly, homotetramer. The cofactor is Mg(2+).

It localises to the cytoplasm. The enzyme catalyses a 2'-deoxyribonucleoside 5'-diphosphate + ATP = a 2'-deoxyribonucleoside 5'-triphosphate + ADP. It catalyses the reaction a ribonucleoside 5'-diphosphate + ATP = a ribonucleoside 5'-triphosphate + ADP. Major role in the synthesis of nucleoside triphosphates other than ATP. The ATP gamma phosphate is transferred to the NDP beta phosphate via a ping-pong mechanism, using a phosphorylated active-site intermediate. In Mycobacterium ulcerans (strain Agy99), this protein is Nucleoside diphosphate kinase.